A 711-amino-acid polypeptide reads, in one-letter code: Ribosomal RNA large subunit methyltransferase K/L (711 aa).

A THUMP domain is found at aspartate 42–leucine 153.

This sequence belongs to the methyltransferase superfamily. RlmKL family.

It localises to the cytoplasm. The catalysed reaction is guanosine(2445) in 23S rRNA + S-adenosyl-L-methionine = N(2)-methylguanosine(2445) in 23S rRNA + S-adenosyl-L-homocysteine + H(+). It catalyses the reaction guanosine(2069) in 23S rRNA + S-adenosyl-L-methionine = N(2)-methylguanosine(2069) in 23S rRNA + S-adenosyl-L-homocysteine + H(+). Functionally, specifically methylates the guanine in position 2445 (m2G2445) and the guanine in position 2069 (m7G2069) of 23S rRNA. In Xanthomonas oryzae pv. oryzae (strain MAFF 311018), this protein is Ribosomal RNA large subunit methyltransferase K/L.